Reading from the N-terminus, the 285-residue chain is Chlorite dismutase (285 aa).

The first 38 residues, 1–38 (MKVRCVSLVAAGLLTIAGSAIGQPAPAPMPAMAPAAKP), serve as a signal peptide directing secretion. Glu105 provides a ligand contact to Ca(2+). His205 serves as a coordination point for heme. Residue Arg218 is the Proton acceptor of the active site. Ca(2+) contacts are provided by Asp227 and Thr266.

Belongs to the chlorite dismutase family. Homopentamer. It depends on heme b as a cofactor.

The protein resides in the periplasm. The enzyme catalyses chloride + O2 = chlorite. Functionally, catalyzes the heme-dependent decomposition of chlorite to O(2) and chloride with high efficiency and specificity. Used to detoxify chlorite, a by-product of the reduction of perchlorate, a primarily anthropogenic pollutant, in perchlorate-respiring bacteria. The chain is Chlorite dismutase (cld) from Ideonella dechloratans.